The primary structure comprises 233 residues: Protein Thf1 (233 aa).

The stretch at D183 to A204 forms a coiled coil. Positions A212–E233 are disordered.

Belongs to the THF1 family.

Its function is as follows. May be involved in photosynthetic membrane biogenesis. In Nostoc sp. (strain PCC 7120 / SAG 25.82 / UTEX 2576), this protein is Protein Thf1.